Consider the following 836-residue polypeptide: Zinc fingers and homeoboxes protein 2 (836 aa).

Residues 1–61 form a disordered region; that stretch reads MASKRKSTTP…EHSSKETEVV (61 aa). Residues 8-19 are compositionally biased toward polar residues; the sequence is TTPCMVRTSQVL. The interaction with EFNB1 stretch occupies residues 27–77; sequence ADRAKDKGAGMPQSDVTKDSWAAEPEHSSKETEVVEVKSMGENLSKKLQGG. The span at 50-61 shows a compositional bias: basic and acidic residues; the sequence is EPEHSSKETEVV. Residue Lys64 forms a Glycyl lysine isopeptide (Lys-Gly) (interchain with G-Cter in SUMO2) linkage. C2H2-type zinc fingers lie at residues 78-101 and 110-133; these read YECK…DMQH and YVCA…SKFH. A disordered region spans residues 164–214; sequence PITASGPGSSDNDPGVSVGKTPMTKTGKLKADAKKVPKKPDEAAPENHMEG. The segment covering 192–214 has biased composition (basic and acidic residues); that stretch reads LKADAKKVPKKPDEAAPENHMEG. The segment at 195-358 is required for homodimerization; sequence DAKKVPKKPD…PAQLTPTKVS (164 aa). 4 DNA-binding regions (homeobox) span residues 263-324, 439-501, 530-591, and 628-690; these read NTTK…WSPE, TPAS…IVHI, PQKF…EQAV, and SPSS…TLSW. A required for repressor activity region spans residues 263–446; sequence NTTKYNSALD…PLTPASDRKK (184 aa). The required for interaction with NFYA stretch occupies residues 263-497; the sequence is NTTKYNSALD…SDHRYRCQRG (235 aa). Positions 317 to 446 are required for nuclear localization; sequence HGISWSPEEV…PLTPASDRKK (130 aa). The tract at residues 404-442 is disordered; that stretch reads GQKRPLVTPQAAPEPKRPHIAQVPEPPPKVANTPLTPAS. A Glycyl lysine isopeptide (Lys-Gly) (interchain with G-Cter in SUMO2) cross-link involves residue Lys455. Composition is skewed to basic and acidic residues over residues 699-709, 730-746, and 813-824; these read MSDDRGRDAVS, YAKD…EKLV, and RVAEGTVERADS. Positions 699-836 are disordered; the sequence is MSDDRGRDAV…DSTPAEAGQA (138 aa). A phosphoserine mark is found at Ser824 and Ser826.

This sequence belongs to the ZHX family. In terms of assembly, homodimer (via homeobox domain 1). Heterodimer with ZHX1 (via homeobox domain 1). Heterodimer with ZHX3 (via homeobox domain 1). Heterodimerization with ZHX1 is not necessary for repressor activity. Interacts (via homeobox domain) with NFYA (via N-terminus). Interacts with EFNB1 intracellular domain peptide; the interaction enhances ZHX2 transcriptional repression activity. As to expression, expressed in retina where it localizes to Muller glial cells of the inner nuclear layer (at protein level). Detected in heart, brain, spleen, lung, liver, skeletal muscle, kidney and testis.

It localises to the nucleus. In terms of biological role, acts as a transcriptional repressor. Represses the promoter activity of the CDC25C gene stimulated by NFYA. May play a role in retinal development where it regulates the composition of bipolar cell populations, by promoting differentiation of bipolar OFF-type cells. In the brain, may promote maintenance and suppress differentiation of neural progenitor cells in the developing cortex. The sequence is that of Zinc fingers and homeoboxes protein 2 (Zhx2) from Mus musculus (Mouse).